The primary structure comprises 655 residues: Import motor subunit, mitochondrial (655 aa).

The transit peptide at 1–23 (MLAAKNILNRSSLSSSFRIATRL) directs the protein to the mitochondrion. Residue Thr-330 is modified to Phosphothreonine. Residues 629–655 (EQLYKNDSNNNNNNNNGNNAESDETKQ) are disordered. The segment covering 637 to 647 (NNNNNNNNGNN) has biased composition (low complexity).

The protein belongs to the heat shock protein 70 family. As to quaternary structure, component of the PAM complex, at least composed of SSC1 (mtHsp70), MGE1, TIM44, PAM16/TIM16, PAM17 and PAM18/TIM14. In the complex, SSC1 interacts directly with PAM18 and TIM44. Interacts with NAP1. Component of endonuclease SceI (endo.SceI), which is a heterodimer of ENS2 and SSC1.

It localises to the mitochondrion matrix. It catalyses the reaction ATP + H2O = ADP + phosphate + H(+). In terms of biological role, essential component of the PAM complex, a complex required for the translocation of transit peptide-containing proteins from the inner membrane into the mitochondrial matrix in an ATP-dependent manner. Constitutes the ATP-driven core of the motor and binds the precursor preprotein. Required for the import of the processed frataxin homolog YFH1 into the mitochondrion. Functionally, acts as a non-catalytic component of endonuclease SceI (endo.SceI), which cleaves specifically at multiple sites on mitochondrial DNA and produces double-stranded breaks. SSC1 confers broader sequence specificity, greater stability, and higher activity on the catalytic subunit. In Saccharomyces cerevisiae (Baker's yeast), this protein is Import motor subunit, mitochondrial.